The sequence spans 574 residues: Cell division cycle 7-related protein kinase (574 aa).

S27 carries the phosphoserine modification. The Protein kinase domain maps to 58 to 574 (FKIEDKIGEG…LHPFFKDMSL (517 aa)). Residues 64–72 (IGEGTFSSV) and K90 contribute to the ATP site. Catalysis depends on D177, which acts as the Proton acceptor. A Glycyl lysine isopeptide (Lys-Gly) (interchain with G-Cter in SUMO2) cross-link involves residue K268. T503 is modified (phosphothreonine).

The protein belongs to the protein kinase superfamily. Ser/Thr protein kinase family. CDC7 subfamily. In terms of assembly, forms a complex with either DBF4/DBF4A or DBF4B, leading to the activation of the kinase activity. Interacts with CLASPIN (via the acidic patch); the interaction is required for phosphorylation of MCM proteins and CLASPIN. The cofactor is Mg(2+).

Its subcellular location is the nucleus. It catalyses the reaction L-seryl-[protein] + ATP = O-phospho-L-seryl-[protein] + ADP + H(+). It carries out the reaction L-threonyl-[protein] + ATP = O-phospho-L-threonyl-[protein] + ADP + H(+). In terms of biological role, kinase involved in initiation of DNA replication. Phosphorylates critical substrates that regulate the G1/S phase transition and initiation of DNA replication, such as MCM proteins and CLASPIN. This chain is Cell division cycle 7-related protein kinase, found in Homo sapiens (Human).